The sequence spans 917 residues: Translation initiation factor IF-2 (917 aa).

Disordered regions lie at residues 1–84 and 150–318; these read MSDG…GRAG and KESE…DRER. Polar residues predominate over residues 10–27; sequence DGNNTPSQGGEQTRSSRL. Composition is skewed to low complexity over residues 69–84, 154–177, and 227–236; these read AAGP…GRAG, QQAA…AAEA, and SRPAAAAPAR. Residues 265 to 274 are compositionally biased toward pro residues; that stretch reads GAPPAPPRRP. The segment covering 282–305 has biased composition (basic and acidic residues); sequence GGSDRRSGRIDVRAAIEGDDDKTR. Residues 416 to 586 enclose the tr-type G domain; it reads PRAPVVTVMG…LLQSEMLDLK (171 aa). Residues 425 to 432 form a G1 region; that stretch reads GHVDHGKT. GTP is bound at residue 425 to 432; that stretch reads GHVDHGKT. Residues 450-454 are G2; sequence GITQH. The segment at 472–475 is G3; it reads DTPG. GTP is bound by residues 472–476 and 526–529; these read DTPGH and NKID. Positions 526 to 529 are G4; that stretch reads NKID. Residues 562 to 564 are G5; it reads SAL.

Belongs to the TRAFAC class translation factor GTPase superfamily. Classic translation factor GTPase family. IF-2 subfamily.

It localises to the cytoplasm. One of the essential components for the initiation of protein synthesis. Protects formylmethionyl-tRNA from spontaneous hydrolysis and promotes its binding to the 30S ribosomal subunits. Also involved in the hydrolysis of GTP during the formation of the 70S ribosomal complex. The polypeptide is Translation initiation factor IF-2 (Gluconobacter oxydans (strain 621H) (Gluconobacter suboxydans)).